We begin with the raw amino-acid sequence, 441 residues long: Squalene synthase (441 aa).

Helical transmembrane passes span 293–313 (SFQF…LVFG) and 420–440 (FKFN…YWYA).

This sequence belongs to the phytoene/squalene synthase family. It depends on Mg(2+) as a cofactor.

The protein localises to the endoplasmic reticulum membrane. The enzyme catalyses 2 (2E,6E)-farnesyl diphosphate + NADPH + H(+) = squalene + 2 diphosphate + NADP(+). The catalysed reaction is 2 (2E,6E)-farnesyl diphosphate + NADH + H(+) = squalene + 2 diphosphate + NAD(+). It functions in the pathway terpene metabolism; lanosterol biosynthesis; lanosterol from farnesyl diphosphate: step 1/3. In terms of biological role, catalyzes the condensation of 2 two farnesyl pyrophosphate moieties to form squalene. It is the first committed enzyme of the sterol biosynthesis pathway. Required for the biosynthesis of ergosterol. This chain is Squalene synthase (ERG9), found in Eremothecium gossypii (strain ATCC 10895 / CBS 109.51 / FGSC 9923 / NRRL Y-1056) (Yeast).